The primary structure comprises 684 residues: Amino-acid acetyltransferase, mitochondrial (684 aa).

Residues 414-439 (PQDATNSASEPRDPSQLSTVATRRKR) are disordered. Polar residues predominate over residues 415 to 434 (QDATNSASEPRDPSQLSTVA). One can recognise an N-acetyltransferase domain in the interval 505–674 (GKSRMTLNDP…YEGVCRGIEP (170 aa)).

Belongs to the acetyltransferase family.

Its subcellular location is the mitochondrion. It carries out the reaction L-glutamate + acetyl-CoA = N-acetyl-L-glutamate + CoA + H(+). It functions in the pathway amino-acid biosynthesis; L-arginine biosynthesis; N(2)-acetyl-L-ornithine from L-glutamate: step 1/4. In terms of biological role, N-acetylglutamate synthase involved in arginine biosynthesis. This chain is Amino-acid acetyltransferase, mitochondrial (ARG2), found in Ajellomyces capsulatus (strain NAm1 / WU24) (Darling's disease fungus).